Reading from the N-terminus, the 292-residue chain is GID complex substrate-recognition subunit 10 (292 aa).

This sequence belongs to the GID4/VID24 family. In terms of assembly, substrate-recognition component of the GID/CTLH ubiquitin ligase complex. In the absence of stress, the complex exists as an inactive anticipatory complex (GID(Ant)), composed of VID30/GID1, the E3 ubiquitin-ligase RMD5/GID2, VID28/GID5, GID8, and the RING-like subunit FYV10/GID9, awaiting a substrate receptor to form the active E3 ligase complex. When cells are shifted to glucose-containing medium, the substrate receptor VID24/GID4 is induced and becomes part of the complex, named GID(SR4). Under osmotic or heat stress, the substrate receptor GID10 is induced and becomes part of the complex, named GID(SR10). Interacts with proteins that have an N-terminal Pro/N-degron, including ART2.

In terms of biological role, substrate-recognition component of the GID E3 ligase complex recruiting N termini and catalyzing ubiquitination of proteins targeted for degradation. GID E3 is regulated through assembly with interchangeable N-degron-binding substrate receptors induced by distinct environmental perturbations. Required for the adaptation to osmotic or heat stress. Required for the regulation of protein levels of the adapter protein ART2, a component of the ART-Rsp5 ubiquitin ligase pathway, part of the plasma membrane quality control. Specific for substrates with an N-terminal Pro (Pro/N-degron), including ART2. Has high affinity for the N-terminal sequence Pro-Tyr-Ile-Thr, and also recognizes nonproline residues such as Met-Tyr-Ile-Thr-Val or Val-Cys-Phe-His. This is GID complex substrate-recognition subunit 10 from Saccharomyces cerevisiae (strain ATCC 204508 / S288c) (Baker's yeast).